The following is a 358-amino-acid chain: DNA polymerase IV (358 aa).

In terms of domain architecture, UmuC spans 4 to 185; it reads IIHIDMDCYF…LPLIKIPGVG (182 aa). Mg(2+) contacts are provided by Asp-8 and Asp-103. Glu-104 is a catalytic residue.

This sequence belongs to the DNA polymerase type-Y family. In terms of assembly, monomer. It depends on Mg(2+) as a cofactor.

Its subcellular location is the cytoplasm. The enzyme catalyses DNA(n) + a 2'-deoxyribonucleoside 5'-triphosphate = DNA(n+1) + diphosphate. Functionally, poorly processive, error-prone DNA polymerase involved in untargeted mutagenesis. Copies undamaged DNA at stalled replication forks, which arise in vivo from mismatched or misaligned primer ends. These misaligned primers can be extended by PolIV. Exhibits no 3'-5' exonuclease (proofreading) activity. May be involved in translesional synthesis, in conjunction with the beta clamp from PolIII. In Shewanella denitrificans (strain OS217 / ATCC BAA-1090 / DSM 15013), this protein is DNA polymerase IV.